The following is a 407-amino-acid chain: ETS domain-containing protein Elk-3 (407 aa).

The segment at residues 5–85 is a DNA-binding region (ETS); it reads ITLWQFLLQL…IGQKFVYKFV (81 aa). A Glycyl lysine isopeptide (Lys-Gly) (interchain with G-Cter in SUMO2) cross-link involves residue K92. A Phosphoserine modification is found at S115. K165 is covalently cross-linked (Glycyl lysine isopeptide (Lys-Gly) (interchain with G-Cter in SUMO2)). 2 disordered regions span residues 234–253 and 271–298; these read SSASPFSSRSPSLSPNSPLP and LEPLNLSSGSKTKSPSLPPKAKKPKGLE. The short motif at 273–277 is the CTBP-binding motif element; sequence PLNLS. S396 is subject to Phosphoserine.

Belongs to the ETS family. In terms of assembly, interacts with CTBP1.

It is found in the nucleus. Functionally, may be a negative regulator of transcription, but can activate transcription when coexpressed with Ras, Src or Mos. Forms a ternary complex with the serum response factor and the ETS and SRF motifs of the Fos serum response element. This is ETS domain-containing protein Elk-3 (ELK3) from Homo sapiens (Human).